Consider the following 114-residue polypeptide: MTWLMLLSACLLTCLGQIAQKYAVEGWRETFPGVLAALRSMWLWLAIACLGLGLLVWLLVLQRMDVGIAYPMLGLNFVLITLVGRYVFKEPVDPQHWLGIALILVGVFQLGRQA.

A run of 3 helical transmembrane segments spans residues 41 to 61, 64 to 84, and 91 to 111; these read MWLW…LLVL, MDVG…TLVG, and PVDP…FQLG.

It belongs to the ArnE family. Heterodimer of ArnE and ArnF.

Its subcellular location is the cell inner membrane. It functions in the pathway bacterial outer membrane biogenesis; lipopolysaccharide biosynthesis. Its function is as follows. Translocates 4-amino-4-deoxy-L-arabinose-phosphoundecaprenol (alpha-L-Ara4N-phosphoundecaprenol) from the cytoplasmic to the periplasmic side of the inner membrane. In Pseudomonas savastanoi pv. phaseolicola (strain 1448A / Race 6) (Pseudomonas syringae pv. phaseolicola (strain 1448A / Race 6)), this protein is Probable 4-amino-4-deoxy-L-arabinose-phosphoundecaprenol flippase subunit ArnE.